The following is a 404-amino-acid chain: Na(+)/H(+) antiporter NhaA 2 (404 aa).

11 helical membrane-spanning segments follow: residues glycine 24–glycine 44, valine 67–isoleucine 87, isoleucine 103–phenylalanine 123, glycine 132–alanine 152, valine 161–phenylalanine 181, serine 184–alanine 204, isoleucine 216–alanine 236, threonine 266–isoleucine 286, isoleucine 303–isoleucine 323, leucine 339–leucine 359, and methionine 372–isoleucine 392.

This sequence belongs to the NhaA Na(+)/H(+) (TC 2.A.33) antiporter family.

The protein resides in the cell membrane. The catalysed reaction is Na(+)(in) + 2 H(+)(out) = Na(+)(out) + 2 H(+)(in). Na(+)/H(+) antiporter that extrudes sodium in exchange for external protons. This Clostridium beijerinckii (strain ATCC 51743 / NCIMB 8052) (Clostridium acetobutylicum) protein is Na(+)/H(+) antiporter NhaA 2.